A 579-amino-acid chain; its full sequence is Zinc finger protein 384 (579 aa).

The tract at residues 171–198 is disordered; that stretch reads TLTEEGGGGGGGGGTVAPPKPPRGRKKK. Residues 175–185 show a composition bias toward gly residues; the sequence is EGGGGGGGGGT. 8 consecutive C2H2-type zinc fingers follow at residues 229–251, 257–279, 285–307, 318–340, 346–368, 374–398, 404–426, and 434–456; these read YRCR…SKSH, HKCP…IRIH, YSCN…TRIH, HKCP…LRIH, YNCS…TRIH, YKCA…RRQH, FKCH…LSTH, and YTCT…MRKH. The segment covering 500 to 513 has biased composition (low complexity); sequence QAQASQASQQQQQQ. Residues 500 to 553 form a disordered region; it reads QAQASQASQQQQQQQPPPPQPPHFQSPGAAPQGGGGGDSNQNPPPQCSFDLTPY. A compositionally biased stretch (pro residues) spans 514–523; it reads QPPPPQPPHF.

It belongs to the krueppel C2H2-type zinc-finger protein family. As to quaternary structure, interacts with BCAR1. As to expression, expressed in osteocytes, osteoblasts, and chondrocytes in bone.

It localises to the nucleus. Functionally, transcription factor that binds the consensus DNA sequence [GC]AAAAA. Seems to bind and regulate the promoters of MMP1, MMP3, MMP7 and COL1A1. This is Zinc finger protein 384 (Znf384) from Rattus norvegicus (Rat).